The sequence spans 262 residues: MSDAEEQEYEEEQPEEEEAAEEEEAPEEPEPVAEREEERPKPSRPVVPPLIPPKIPEGERVDFDDIHRKRMEKDLLELQTLIDVHFEQRKKEEEELVALKERIERRRAERAEQQRFRTEKERERQAKLAEEKMRKEEEEAKKRAEDDAKKKKVLSNMGAHFGGYLVKAEQKRGKRQTGREMKQRILSERKKPLNIDHMGEDQLREKAQELSDWIHQLESEKFDLMAKLKQQKYEINVLYNRISHAQKFRKGAGKGRVGGRWK.

Residues 1–31 (MSDAEEQEYEEEQPEEEEAAEEEEAPEEPEP) are compositionally biased toward acidic residues. Disordered stretches follow at residues 1–59 (MSDA…PEGE), 107–153 (RAER…KKKV), and 165–197 (LVKA…NIDH). Position 2 is a phosphoserine; by CK2 (S2). The segment covering 32-41 (VAEREEERPK) has biased composition (basic and acidic residues). Positions 43–55 (SRPVVPPLIPPKI) are enriched in pro residues. Basic and acidic residues-rich tracts occupy residues 107–149 (RAER…DDAK) and 177–197 (TGRE…NIDH).

It belongs to the troponin T family. Interacts with TPM3.

Its function is as follows. Troponin T is the tropomyosin-binding subunit of troponin, the thin filament regulatory complex which confers calcium-sensitivity to striated muscle actomyosin ATPase activity. This is Troponin T, slow skeletal muscle (TNNT1) from Sus scrofa (Pig).